The following is a 407-amino-acid chain: Argininosuccinate synthase (407 aa).

Residues 13-21 (AYSGGLDTS) and Ala40 contribute to the ATP site. L-citrulline contacts are provided by Tyr91 and Ser96. Gly121 provides a ligand contact to ATP. L-aspartate contacts are provided by Thr123, Asn127, and Asp128. Asn127 contributes to the L-citrulline binding site. 5 residues coordinate L-citrulline: Arg131, Ser182, Ser191, Glu267, and Tyr279.

Belongs to the argininosuccinate synthase family. Type 1 subfamily. As to quaternary structure, homotetramer.

Its subcellular location is the cytoplasm. The enzyme catalyses L-citrulline + L-aspartate + ATP = 2-(N(omega)-L-arginino)succinate + AMP + diphosphate + H(+). It functions in the pathway amino-acid biosynthesis; L-arginine biosynthesis; L-arginine from L-ornithine and carbamoyl phosphate: step 2/3. In Mesorhizobium japonicum (strain LMG 29417 / CECT 9101 / MAFF 303099) (Mesorhizobium loti (strain MAFF 303099)), this protein is Argininosuccinate synthase.